The following is a 466-amino-acid chain: Adenosylhomocysteinase (466 aa).

Residues Thr57, Asp132, and Glu192 each contribute to the substrate site. 193-195 (TTT) contributes to the NAD(+) binding site. The substrate site is built by Lys222 and Asp226. NAD(+) is bound by residues Asn227, 256 to 261 (GYGDVG), Glu279, Asn314, 335 to 337 (IGH), and Asn380.

The protein belongs to the adenosylhomocysteinase family. NAD(+) serves as cofactor.

It localises to the cytoplasm. It catalyses the reaction S-adenosyl-L-homocysteine + H2O = L-homocysteine + adenosine. It participates in amino-acid biosynthesis; L-homocysteine biosynthesis; L-homocysteine from S-adenosyl-L-homocysteine: step 1/1. Functionally, may play a key role in the regulation of the intracellular concentration of adenosylhomocysteine. The polypeptide is Adenosylhomocysteinase (Rhizobium rhizogenes (strain K84 / ATCC BAA-868) (Agrobacterium radiobacter)).